Reading from the N-terminus, the 336-residue chain is Adenosine deaminase (336 aa).

Zn(2+)-binding residues include His15 and His17. Substrate-binding residues include His17, Asp19, and Gly172. His199 contributes to the Zn(2+) binding site. Glu202 functions as the Proton donor in the catalytic mechanism. Position 279 (Asp279) interacts with Zn(2+).

Belongs to the metallo-dependent hydrolases superfamily. Adenosine and AMP deaminases family. Adenosine deaminase subfamily. It depends on Zn(2+) as a cofactor.

The enzyme catalyses adenosine + H2O + H(+) = inosine + NH4(+). The catalysed reaction is 2'-deoxyadenosine + H2O + H(+) = 2'-deoxyinosine + NH4(+). Functionally, catalyzes the hydrolytic deamination of adenosine and 2-deoxyadenosine. This is Adenosine deaminase from Streptococcus thermophilus (strain ATCC BAA-250 / LMG 18311).